The chain runs to 310 residues: MSENRIRIATRKSPLAMWQAEFVKAELERIHPGIVVELLPMSTKGDVILDTPLAKVGGKGLFVKELEVAMLDDLADIAVHSMKDVPVDFPEGLGLEVICEREDPRDAFVSNLYKSISELPLGATVGTSSLRRQCQIRASRPDLIIKDLRGNVGTRLAKLDNGEYDAIILAAAGLIRLKLSERIASFISAEESLPANGQGAVGIECRINDERVKALLAPLEHLETRYRVLAERAMNTRLEGGCQVPIGAFAEIDGDEMTLRGLVGNPDGSEIIEGVITGPKTDATQLGVALAEELLSKGAKSILDAVYAKA.

C242 carries the post-translational modification S-(dipyrrolylmethanemethyl)cysteine.

This sequence belongs to the HMBS family. In terms of assembly, monomer. Dipyrromethane is required as a cofactor.

The enzyme catalyses 4 porphobilinogen + H2O = hydroxymethylbilane + 4 NH4(+). It participates in porphyrin-containing compound metabolism; protoporphyrin-IX biosynthesis; coproporphyrinogen-III from 5-aminolevulinate: step 2/4. Functionally, tetrapolymerization of the monopyrrole PBG into the hydroxymethylbilane pre-uroporphyrinogen in several discrete steps. The chain is Porphobilinogen deaminase from Shewanella baltica (strain OS195).